The following is a 141-amino-acid chain: Guanyl-specific ribonuclease Sa3 (141 aa).

Positions 1–36 form a signal peptide, or 43; it reads MRIPPRLVALAGAAAVAATLIAGPVAAAAPASHAVA. C52 and C141 are oxidised to a cystine. E99 acts as the Proton acceptor in catalysis. Catalysis depends on H130, which acts as the Proton donor.

It belongs to the ribonuclease N1/T1 family.

The protein localises to the secreted. It catalyses the reaction [RNA] containing guanosine + H2O = an [RNA fragment]-3'-guanosine-3'-phosphate + a 5'-hydroxy-ribonucleotide-3'-[RNA fragment].. The polypeptide is Guanyl-specific ribonuclease Sa3 (rnaSA3) (Kitasatospora aureofaciens (Streptomyces aureofaciens)).